The sequence spans 187 residues: Putative manganese efflux pump MntP (187 aa).

6 helical membrane-spanning segments follow: residues 3 to 23 (WLTILGISVALAMDAFAVALA), 39 to 59 (LGFHFGLFQALMPIGGWLLGM), 65 to 85 (ISAYDHWIAFGLLVFVGGRMV), 103 to 123 (GMTMVMLSVATSIDAFAVGLS), 124 to 144 (IAMLGVSVWLPATVIGLVAGV), and 166 to 186 (ICGGLVLCLIGLKILLEHTLL).

Belongs to the MntP (TC 9.B.29) family.

The protein localises to the cell inner membrane. Functionally, probably functions as a manganese efflux pump. This chain is Putative manganese efflux pump MntP, found in Geobacter sp. (strain M21).